The sequence spans 377 residues: DNA-directed RNA polymerase subunit alpha (377 aa).

The alpha N-terminal domain (alpha-NTD) stretch occupies residues 1-259 (MSDSSHNLLY…KHFSVFEKMD (259 aa)). The tract at residues 276–377 (KDDILHKLVL…KIRLSKNTKG (102 aa)) is alpha C-terminal domain (alpha-CTD).

Belongs to the RNA polymerase alpha chain family. Homodimer. The RNAP catalytic core consists of 2 alpha, 1 beta, 1 beta' and 1 omega subunit. When a sigma factor is associated with the core the holoenzyme is formed, which can initiate transcription.

It carries out the reaction RNA(n) + a ribonucleoside 5'-triphosphate = RNA(n+1) + diphosphate. Functionally, DNA-dependent RNA polymerase catalyzes the transcription of DNA into RNA using the four ribonucleoside triphosphates as substrates. The polypeptide is DNA-directed RNA polymerase subunit alpha (Chlamydia trachomatis serovar A (strain ATCC VR-571B / DSM 19440 / HAR-13)).